The following is a 431-amino-acid chain: Histidine--tRNA ligase (431 aa).

It belongs to the class-II aminoacyl-tRNA synthetase family. In terms of assembly, homodimer.

The protein resides in the cytoplasm. The enzyme catalyses tRNA(His) + L-histidine + ATP = L-histidyl-tRNA(His) + AMP + diphosphate + H(+). The chain is Histidine--tRNA ligase from Neisseria meningitidis serogroup B (strain ATCC BAA-335 / MC58).